The sequence spans 451 residues: Glycine--tRNA ligase (451 aa).

2 residues coordinate substrate: arginine 94 and glutamate 164. ATP-binding positions include 196–198, 206–211, 281–282, and 325–328; these read RNE, FRTREF, EL, and GVER. 211-215 is a substrate binding site; sequence FEQME. 321 to 325 is a binding site for substrate; it reads EPSVG.

This sequence belongs to the class-II aminoacyl-tRNA synthetase family. As to quaternary structure, homodimer.

It localises to the cytoplasm. It catalyses the reaction tRNA(Gly) + glycine + ATP = glycyl-tRNA(Gly) + AMP + diphosphate. Its function is as follows. Catalyzes the attachment of glycine to tRNA(Gly). The sequence is that of Glycine--tRNA ligase from Mesoplasma florum (strain ATCC 33453 / NBRC 100688 / NCTC 11704 / L1) (Acholeplasma florum).